Here is a 156-residue protein sequence, read N- to C-terminus: 6,7-dimethyl-8-ribityllumazine synthase (156 aa).

5-amino-6-(D-ribitylamino)uracil-binding positions include F23, 57–59 (AFE), and 81–83 (AVI). 86–87 (ST) is a binding site for (2S)-2-hydroxy-3-oxobutyl phosphate. Residue H89 is the Proton donor of the active site. F114 is a binding site for 5-amino-6-(D-ribitylamino)uracil. R128 is a (2S)-2-hydroxy-3-oxobutyl phosphate binding site.

The protein belongs to the DMRL synthase family.

The catalysed reaction is (2S)-2-hydroxy-3-oxobutyl phosphate + 5-amino-6-(D-ribitylamino)uracil = 6,7-dimethyl-8-(1-D-ribityl)lumazine + phosphate + 2 H2O + H(+). It functions in the pathway cofactor biosynthesis; riboflavin biosynthesis; riboflavin from 2-hydroxy-3-oxobutyl phosphate and 5-amino-6-(D-ribitylamino)uracil: step 1/2. In terms of biological role, catalyzes the formation of 6,7-dimethyl-8-ribityllumazine by condensation of 5-amino-6-(D-ribitylamino)uracil with 3,4-dihydroxy-2-butanone 4-phosphate. This is the penultimate step in the biosynthesis of riboflavin. In Sulfurospirillum multivorans (Dehalospirillum multivorans), this protein is 6,7-dimethyl-8-ribityllumazine synthase.